Here is a 32-residue protein sequence, read N- to C-terminus: Ferredoxin (32 aa).

In terms of domain architecture, 2Fe-2S ferredoxin-type spans 3 to 32 (YKVRLLSEAEGIDVTIDCADDVYILDAAEE).

The protein belongs to the 2Fe2S plant-type ferredoxin family. It depends on [2Fe-2S] cluster as a cofactor.

It is found in the plastid. It localises to the chloroplast. Its function is as follows. Ferredoxins are iron-sulfur proteins that transfer electrons in a wide variety of metabolic reactions. This is Ferredoxin from Porphyridium purpureum (Red alga).